We begin with the raw amino-acid sequence, 250 residues long: Histone H1.3 (250 aa).

2 disordered regions span residues 17–53 (AASG…QMVD) and 104–250 (QTKG…ATKK). Over residues 27 to 42 (KKAAATPKSKKSTAAP) the composition is skewed to low complexity. Residues 44–118 (SHPPTQQMVD…GASGSFKLSR (75 aa)) enclose the H15 domain. Basic and acidic residues predominate over residues 120–133 (AKKDAKPKASAVEK). Over residues 138–161 (VNASAAAATKRSSSTSTTKKAAGA) the composition is skewed to low complexity. A compositionally biased stretch (basic and acidic residues) spans 174-191 (KNVEKKKADKEKAKDAKK). A compositionally biased stretch (low complexity) spans 192 to 234 (TGTIKAKLTTAKAKSSATKPKTPKPKTTSAKPKKVVSATTPKK). Residues 235 to 250 (TAVKKPKAKTASATKK) are compositionally biased toward basic residues.

The protein belongs to the histone H1/H5 family.

The protein localises to the nucleus. Its subcellular location is the chromosome. Its function is as follows. Histones H1 are necessary for the condensation of nucleosome chains into higher-order structures. The sequence is that of Histone H1.3 (His1.3) from Drosophila virilis (Fruit fly).